Reading from the N-terminus, the 301-residue chain is Probable 5-dehydro-4-deoxyglucarate dehydratase (301 aa).

It belongs to the DapA family.

It catalyses the reaction 5-dehydro-4-deoxy-D-glucarate + H(+) = 2,5-dioxopentanoate + CO2 + H2O. Its pathway is carbohydrate acid metabolism; D-glucarate degradation; 2,5-dioxopentanoate from D-glucarate: step 2/2. This is Probable 5-dehydro-4-deoxyglucarate dehydratase from Xanthobacter autotrophicus (strain ATCC BAA-1158 / Py2).